Consider the following 859-residue polypeptide: Fanconi anemia group B protein (859 aa).

The residue at position 2 (threonine 2) is an N-acetylthreonine.

As to quaternary structure, belongs to the multisubunit FA complex composed of FANCA, FANCB, FANCC, FANCE, FANCF, FANCG, FANCL/PHF9 and FANCM. The complex is not found in FA patients.

Its subcellular location is the nucleus. In terms of biological role, DNA repair protein required for FANCD2 ubiquitination. In Homo sapiens (Human), this protein is Fanconi anemia group B protein (FANCB).